We begin with the raw amino-acid sequence, 1913 residues long: MGNSYAGQLKSARFEEALHNSIEASLRCSTAVPRPIFSQLYLDPDQHPFSTADVKPKVEDLDKDLVHPYTQNGSVDFSHNVAMNEMEDDEDEEEMSDSNSPPIPYSQKPAPEGSCTTDGFCQAGKDLRLVSLCMEQIDIPAGFLLVGAKSPNLPEHILVCAVDKRFLPDDHGKNALLGFSGNCIGCGERGFRYFTEFSNHINLKLTTQPKKQKHLKYYLVRTSQGVLSKGPLICWKECRSRQSSALCHSTKPISSVSSAVAPENGTANGYKAGFTVTEAANGTSGHGGKSSSCSSTPSRPGNYSLSPRPTFTSVDQANMFISGPPKKRHRGWYPGSPVSQSALVVPAPTVRPLSRTEPLLSTPVPQTPLTGILQPRPVLAGETVIVPENLLSNSGVRPVILIGYGTLPYFYGNVGDIVVSPLLVNCYKIPQLENKDLEQLGLTSTHLLSVENMILLTIQYLVRLGPDQIPLREEFEQIMLTAMQEFSVRERALPLGAPCAPMSPAQLPWLARLAASVSQDLVHVIVTQNSLAEGISETLRLLSEMKHYQRLPDYVVAICASKIRGNEFCVVVLGQHQSRALAESMLTTSEFLKEISYELITGKVSFLASHFKTTSLGDDLDKLLEKMQQRRGDSVVTPFNGDLDECVSPQEAAAMIPTQNLDVDNETFQIYQPQLTVARRLLSQVCAIADSGSQSLDLGHFSKVDFIIIVPRSEVLVQQTLQRVRQSGVLVDLGLEESGLAHQRAERYVVRLDNEIQSKFEVFMRRVKQNPYTLFVLVHDNSHVELTSVISGSLSHGEPTHGLADRVINCREVLEAFNLLVLQVSSFPYTLQTQQSRISSSNEVHWIQLDTMEDAGCEKLYFGLDEYSKSLQWGITSPLLRCDETFEKMVSTLLERYPRLHSMVVRCYLLIQQYSEALMALTTMASLRDHSTPETLSIMDDLITSPGKNKSGKGHMLVIRVPSVQLAMLAKERLQEVRDKLGLQYRFEIILGSPASELTVETHFVTRLKTWRGNDQDEWIPRTYQDLEGLPCIVILTGKDPLGETFPRSLKYCDLRLIDSSYLTRTALEQEVGLACCYVSKEVIRGPAAALDLSAKEAERVPASENDSEELLIDLERPQSNSSAVTGTSGSIMENGVSSSSTAGKPQQQLLTPTSSIRLDEGVSASTAVVGEILKQECDSLDPPMASSTTSKPSSSSSSSAQALAWSRQPRGLHTALPPVIILSKAAYSLLGSQKGGRLPSSSSLLPHADVAWVSSLRPGLHKDMSSEEQSLYYRQWTSARQHHADYSNQPDPISGARTLHPRRLLLTGPPQVGKTGSYLQFLRILFRMLIRLLEVDVYNEEEINTDHSDDSELSQSEGEPWPDIETFSKMPFDVSVHDPKYRLMSLVYSEKLAGIKQEVIKEYKVEEPRQRETMSMMLTQYAAYNTFHHCEQCQQYMAFTPASQMSDSTLHAFTFSSSMLGEEVQLYFIIPKSKESHFVFSKQGRHLESMRLPLVSDKNLNAVKSPIFTPSSGRHEHGLLNLFHAMEGISHLHLLVVKEYEMPLYRKYWPNHIMLVLPGMFNNAGVGAARFLIKELSYHNLELERNRLEELGVKRQCVWPFIVVMDDSCVLWNIHSVQEQTSQPTEAGISSKNVSLKSVLQHIEATPKIIHYAILGIQKWNSKLTSQSLKAPFSRCHVHDFILLNIDLTQNVQYDFNRYFCEDVDFNLRTNSSGLLICRFNNFSLMKKHVQVGGQRDFIIKPKLMVSENVVPILPLQYVCAPDSEHTLLAAPAQFLLEKFLQHASYKLFPKAIHNFKSPVLAIDCYLNIGQEVAICYVSSRPHSSNVNCEGVFFSGLLLYLCDSFVGADLLKKFKFLKGATLCVICQDRSSLRQTIVRLELEDEWQFRLRDEFQTANSSDDKPLYFLTGRHV.

The segment covering 86–96 has biased composition (acidic residues); that stretch reads MEDDEDEEEMS. Disordered stretches follow at residues 86 to 111, 281 to 309, 1097 to 1157, and 1179 to 1207; these read MEDD…KPAP, NGTS…SPRP, EAER…TSSI, and DSLD…LAWS. Over residues 289 to 301 the composition is skewed to low complexity; that stretch reads KSSSCSSTPSRPG. Positions 1118–1157 are enriched in polar residues; that stretch reads PQSNSSAVTGTSGSIMENGVSSSSTAGKPQQQLLTPTSSI. A compositionally biased stretch (low complexity) spans 1187–1200; the sequence is SSTTSKPSSSSSSS. Residues 1832-1852 form a helical membrane-spanning segment; it reads GVFFSGLLLYLCDSFVGADLL.

This sequence belongs to the GREB1 family. Expressed in the inner ear, with a high presence in the spiral ganglia, cochlear nerve bundles, and hair cells.

Its subcellular location is the membrane. In terms of biological role, plays a major role in early metanephros and genital development. This Mus musculus (Mouse) protein is GREB1-like protein (Greb1l).